Consider the following 793-residue polypeptide: Protein translocase subunit SecA 2 (793 aa).

Residues Gln77, 95-99 (GEGKT), and Asp493 contribute to the ATP site.

This sequence belongs to the SecA family. As to quaternary structure, monomer and homodimer (Potential). Part of the accessory SecA2/SecY2 protein translocation apparatus required to export cell wall protein GspB.

Its subcellular location is the cell membrane. It localises to the cytoplasm. The catalysed reaction is ATP + H2O + cellular proteinSide 1 = ADP + phosphate + cellular proteinSide 2.. Functionally, part of the accessory SecA2/SecY2 system specifically required to export GspB, a serine-rich repeat cell wall protein encoded upstream in the same operon. This is Protein translocase subunit SecA 2 from Streptococcus gordonii.